The sequence spans 411 residues: Na(+)-translocating NADH-quinone reductase subunit F (411 aa).

A helical membrane pass occupies residues 5–25 (VILALGIAAFTVIVLVLVAII). The 2Fe-2S ferredoxin-type domain occupies 36–130 (GDITIDINDD…NMEVELPEEI (95 aa)). [2Fe-2S] cluster contacts are provided by Cys73, Cys79, Cys82, and Cys114. The 141-residue stretch at 133–273 (VKKWECTVIS…SGPFGEFFAK (141 aa)) folds into the FAD-binding FR-type domain.

Belongs to the NqrF family. As to quaternary structure, composed of six subunits; NqrA, NqrB, NqrC, NqrD, NqrE and NqrF. It depends on [2Fe-2S] cluster as a cofactor. The cofactor is FAD.

The protein localises to the cell inner membrane. The catalysed reaction is a ubiquinone + n Na(+)(in) + NADH + H(+) = a ubiquinol + n Na(+)(out) + NAD(+). Functionally, NQR complex catalyzes the reduction of ubiquinone-1 to ubiquinol by two successive reactions, coupled with the transport of Na(+) ions from the cytoplasm to the periplasm. The first step is catalyzed by NqrF, which accepts electrons from NADH and reduces ubiquinone-1 to ubisemiquinone by a one-electron transfer pathway. This chain is Na(+)-translocating NADH-quinone reductase subunit F, found in Haemophilus influenzae (strain PittGG).